A 274-amino-acid polypeptide reads, in one-letter code: Shikimate dehydrogenase (NADP(+)) (274 aa).

Shikimate is bound by residues Ser14 to Ser16 and Thr60. Catalysis depends on Lys64, which acts as the Proton acceptor. Glu76 provides a ligand contact to NADP(+). Shikimate-binding residues include Asn85 and Asp101. Residues Gly126–Ala130, Asn150–Lys155, and Met214 each bind NADP(+). Residue Tyr216 participates in shikimate binding. NADP(+) is bound at residue Gly238.

It belongs to the shikimate dehydrogenase family. Homodimer.

It catalyses the reaction shikimate + NADP(+) = 3-dehydroshikimate + NADPH + H(+). The protein operates within metabolic intermediate biosynthesis; chorismate biosynthesis; chorismate from D-erythrose 4-phosphate and phosphoenolpyruvate: step 4/7. Its function is as follows. Involved in the biosynthesis of the chorismate, which leads to the biosynthesis of aromatic amino acids. Catalyzes the reversible NADPH linked reduction of 3-dehydroshikimate (DHSA) to yield shikimate (SA). The polypeptide is Shikimate dehydrogenase (NADP(+)) (Pseudomonas paraeruginosa (strain DSM 24068 / PA7) (Pseudomonas aeruginosa (strain PA7))).